A 296-amino-acid polypeptide reads, in one-letter code: Hca operon transcriptional activator HcaR (296 aa).

The 58-residue stretch at 1-58 (MELRHLRYFVAVAQALNFTRAAEKLHTSQPSLSSQIRDLENCVGVPLLVRDKRKVALT) folds into the HTH lysR-type domain. The segment at residues 18–38 (FTRAAEKLHTSQPSLSSQIRD) is a DNA-binding region (H-T-H motif).

It belongs to the LysR transcriptional regulatory family.

Transcriptional activator of the hca operon for 3-phenylpropionic acid catabolism. This is Hca operon transcriptional activator HcaR (hcaR) from Escherichia coli (strain K12).